A 399-amino-acid polypeptide reads, in one-letter code: CCA-adding enzyme (399 aa).

ATP contacts are provided by Gly32 and Arg35. CTP contacts are provided by Gly32 and Arg35. The Mg(2+) site is built by Asp45 and Asp47. ATP contacts are provided by Arg116, Asp159, Arg162, Arg165, and Arg168. CTP-binding residues include Arg116, Asp159, Arg162, Arg165, and Arg168.

It belongs to the tRNA nucleotidyltransferase/poly(A) polymerase family. Bacterial CCA-adding enzyme type 3 subfamily. As to quaternary structure, homodimer. It depends on Mg(2+) as a cofactor.

The catalysed reaction is a tRNA precursor + 2 CTP + ATP = a tRNA with a 3' CCA end + 3 diphosphate. It carries out the reaction a tRNA with a 3' CCA end + 2 CTP + ATP = a tRNA with a 3' CCACCA end + 3 diphosphate. Catalyzes the addition and repair of the essential 3'-terminal CCA sequence in tRNAs without using a nucleic acid template. Adds these three nucleotides in the order of C, C, and A to the tRNA nucleotide-73, using CTP and ATP as substrates and producing inorganic pyrophosphate. tRNA 3'-terminal CCA addition is required both for tRNA processing and repair. Also involved in tRNA surveillance by mediating tandem CCA addition to generate a CCACCA at the 3' terminus of unstable tRNAs. While stable tRNAs receive only 3'-terminal CCA, unstable tRNAs are marked with CCACCA and rapidly degraded. The protein is CCA-adding enzyme of Streptococcus sanguinis (strain SK36).